We begin with the raw amino-acid sequence, 327 residues long: Aliphatic sulfonates import ATP-binding protein SsuB (327 aa).

A disordered region spans residues 21–54 (ELAQPRIADGDAQDAAVYERDGGAHAPPDGDRAD). A compositionally biased stretch (basic and acidic residues) spans 37–54 (VYERDGGAHAPPDGDRAD). The ABC transporter domain maps to 66 to 285 (VRLTRVSKRY…ARASAAFAAL (220 aa)). An ATP-binding site is contributed by 98–105 (GRSGCGKS). Positions 300 to 327 (APAAPNAAGPEGASRGRAAPASGLRWAV) are disordered.

This sequence belongs to the ABC transporter superfamily. Aliphatic sulfonates importer (TC 3.A.1.17.2) family. The complex is composed of two ATP-binding proteins (SsuB), two transmembrane proteins (SsuC) and a solute-binding protein (SsuA).

The protein localises to the cell inner membrane. The enzyme catalyses ATP + H2O + aliphatic sulfonate-[sulfonate-binding protein]Side 1 = ADP + phosphate + aliphatic sulfonateSide 2 + [sulfonate-binding protein]Side 1.. Functionally, part of the ABC transporter complex SsuABC involved in aliphatic sulfonates import. Responsible for energy coupling to the transport system. In Burkholderia pseudomallei (strain K96243), this protein is Aliphatic sulfonates import ATP-binding protein SsuB.